We begin with the raw amino-acid sequence, 407 residues long: MNFIITTRDFSNDDSVLRAAEMRDNVAGSISKAYKGTVRAEGKKKLLLKHLPVPPGGCSRRNSNLFVFCTERDYRKFHQGIAQLKRAPAELDPHEIQQVTASIRCRLQPSLREPPTPADELQTAVSRVCALFNQLVFTAQLRHYCEHQDKVVSYARDELTKRCGEKSALGVEVHQLVALLPHERHRELCHVLIGLLHQTPHMWARSIRLIGHLRHYLQNSFLHLLMNSGLDIAQVFDGCYHSEAYRMLFQIGHTDSVSAALELSHSAAAGPPEADENNDEGEEDDDELRHSDPAPLHDSKKPRNARRPRTRVPPHEQKPEENEEEEEELFPSCKATAAFLRAEPSVSNDDGNGGERCDTLATALRHRADEEDGPLASQTSVRVAATPSPSVTSALTPVTSPITPLCI.

The disordered stretch occupies residues 268-330; that stretch reads AAGPPEADEN…ENEEEEEELF (63 aa). A compositionally biased stretch (acidic residues) spans 273 to 286; that stretch reads EADENNDEGEEDDD. Basic and acidic residues predominate over residues 287–301; that stretch reads ELRHSDPAPLHDSKK. Residues 302-312 show a composition bias toward basic residues; it reads PRNARRPRTRV.

The protein belongs to the HHV-5 UL34 protein family.

It localises to the host nucleus. In terms of biological role, acts as a transcriptional repressor of the US3 gene expression through a specific DNA sequence named the transcriptional repressive element (tre). This chain is Transcriptional regulator UL34 (UL34), found in Homo sapiens (Human).